Consider the following 551-residue polypeptide: Hyaluronan synthase 2 (551 aa).

At 1–11 the chain is on the cytoplasmic side; that stretch reads MHCERFICILR. The chain crosses the membrane as a helical span at residues 12 to 32; the sequence is IIGTTLFGVSLLLGISAAYIV. Over 33-45 the chain is Extracellular; it reads GYQFIQTDNYYFS. A helical membrane pass occupies residues 46–66; it reads FGLYGAILALHLIIQSLFAFL. At 67 to 374 the chain is on the cytoplasmic side; the sequence is EHRKMKRSLE…NSLWFHKHHL (308 aa). Residues 375 to 395 form a helical membrane-spanning segment; it reads WMTYEAVITGFFPFFLIATVI. Residues 396–402 are Extracellular-facing; it reads QLFYRGR. A helical transmembrane segment spans residues 403-423; that stretch reads IWNILLFLLTVQLVGLIKSSF. The Cytoplasmic portion of the chain corresponds to 424 to 429; it reads ASALRG. The chain crosses the membrane as a helical span at residues 430-450; it reads NIVMVFMSFYSVLYMSSLLPA. The Extracellular segment spans residues 451 to 470; sequence KMFAIATINKAGWGTSGRKT. A helical transmembrane segment spans residues 471-491; the sequence is IVVNFIGLIPITVWFTILLGG. Residues 492–509 lie on the Cytoplasmic side of the membrane; the sequence is VCYTIWRETKKPFSESEK. The helical transmembrane segment at 510–530 threads the bilayer; that stretch reads IVLAVGAILYACYWVMLLTMY. Residues 531–551 lie on the Extracellular side of the membrane; the sequence is VSLVMKCGRRRKEPQHDLVLA.

Belongs to the NodC/HAS family. Homodimer; dimerization promotes enzymatic activity. It depends on Mg(2+) as a cofactor.

Its subcellular location is the cell membrane. The protein localises to the endoplasmic reticulum membrane. It is found in the vesicle. It localises to the golgi apparatus membrane. The protein resides in the lysosome. The enzyme catalyses [hyaluronan](n) + UDP-N-acetyl-alpha-D-glucosamine = N-acetyl-beta-D-glucosaminyl-(1-&gt;4)-[hyaluronan](n) + UDP + H(+). The catalysed reaction is N-acetyl-beta-D-glucosaminyl-(1-&gt;4)-[hyaluronan](n) + UDP-alpha-D-glucuronate = [hyaluronan](n+1) + UDP + H(+). It participates in glycan biosynthesis; hyaluronan biosynthesis. Functionally, catalyzes the addition of GlcNAc or GlcUA monosaccharides to the nascent hyaluronan polymer. Therefore, it is essential to hyaluronan synthesis a major component of most extracellular matrices that has a structural role in tissues architectures and regulates cell adhesion, migration and differentiation. This is one of three isoenzymes responsible for cellular hyaluronan synthesis and it is particularly responsible for the synthesis of high molecular mass hyaluronan. This is Hyaluronan synthase 2 (has2) from Xenopus laevis (African clawed frog).